We begin with the raw amino-acid sequence, 178 residues long: Peptide methionine sulfoxide reductase MsrA (178 aa).

The active site involves Cys-14.

The protein belongs to the MsrA Met sulfoxide reductase family.

It carries out the reaction L-methionyl-[protein] + [thioredoxin]-disulfide + H2O = L-methionyl-(S)-S-oxide-[protein] + [thioredoxin]-dithiol. The enzyme catalyses [thioredoxin]-disulfide + L-methionine + H2O = L-methionine (S)-S-oxide + [thioredoxin]-dithiol. Functionally, has an important function as a repair enzyme for proteins that have been inactivated by oxidation. Catalyzes the reversible oxidation-reduction of methionine sulfoxide in proteins to methionine. The polypeptide is Peptide methionine sulfoxide reductase MsrA (Bacillus pumilus (strain SAFR-032)).